A 97-amino-acid chain; its full sequence is Exodeoxyribonuclease 7 small subunit (97 aa).

A disordered region spans residues 64 to 97 (NGQLHPAEEKGDDVSNNGVQNQGYKSQFLDGDVF). Residues 77-88 (VSNNGVQNQGYK) show a composition bias toward polar residues.

It belongs to the XseB family. In terms of assembly, heterooligomer composed of large and small subunits.

It localises to the cytoplasm. It carries out the reaction Exonucleolytic cleavage in either 5'- to 3'- or 3'- to 5'-direction to yield nucleoside 5'-phosphates.. Bidirectionally degrades single-stranded DNA into large acid-insoluble oligonucleotides, which are then degraded further into small acid-soluble oligonucleotides. The chain is Exodeoxyribonuclease 7 small subunit from Limosilactobacillus fermentum (strain NBRC 3956 / LMG 18251) (Lactobacillus fermentum).